The following is an 82-amino-acid chain: Small ribosomal subunit protein bS18 (82 aa).

The segment at 1 to 20 (MVDINQIPTRRPFHRRRKTC) is disordered.

Belongs to the bacterial ribosomal protein bS18 family. In terms of assembly, part of the 30S ribosomal subunit. Forms a tight heterodimer with protein bS6.

Functionally, binds as a heterodimer with protein bS6 to the central domain of the 16S rRNA, where it helps stabilize the platform of the 30S subunit. This Brucella anthropi (strain ATCC 49188 / DSM 6882 / CCUG 24695 / JCM 21032 / LMG 3331 / NBRC 15819 / NCTC 12168 / Alc 37) (Ochrobactrum anthropi) protein is Small ribosomal subunit protein bS18.